Here is a 435-residue protein sequence, read N- to C-terminus: Origin recognition complex subunit 5 (435 aa).

37–44 (GHTASGKT) provides a ligand contact to ATP.

The protein belongs to the ORC5 family. As to quaternary structure, component of ORC, a complex composed of at least 6 subunits: ORC1, ORC2, ORC3, ORC4, ORC5 and ORC6. ORC is regulated in a cell-cycle dependent manner. It is sequentially assembled at the exit from anaphase of mitosis and disassembled as cells enter S phase. Post-translationally, multi-mono-ubiquitinated by OBI1; ubiquitination is important for efficient DNA replication origin site activation. Ubiquitination levels are low in mitotic and early G1-phAse cells and are induced in late G1-/early S-phase, peaking in S-phase and decrease toward the end of the cell cycle. As to expression, abundant in spleen, ovary, prostate, testis, and colon mucosa.

It is found in the nucleus. Its subcellular location is the chromosome. Its function is as follows. Component of the origin recognition complex (ORC) that binds origins of replication. DNA-binding is ATP-dependent. The specific DNA sequences that define origins of replication have not been identified yet. ORC is required to assemble the pre-replication complex necessary to initiate DNA replication. In Homo sapiens (Human), this protein is Origin recognition complex subunit 5 (ORC5).